A 104-amino-acid chain; its full sequence is ATP-dependent Clp protease adapter protein ClpS (104 aa).

This sequence belongs to the ClpS family. As to quaternary structure, binds to the N-terminal domain of the chaperone ClpA.

Involved in the modulation of the specificity of the ClpAP-mediated ATP-dependent protein degradation. The polypeptide is ATP-dependent Clp protease adapter protein ClpS (Burkholderia thailandensis (strain ATCC 700388 / DSM 13276 / CCUG 48851 / CIP 106301 / E264)).